The chain runs to 422 residues: UDP-N-acetylglucosamine 1-carboxyvinyltransferase (422 aa).

22-23 (KN) is a binding site for phosphoenolpyruvate. Residue Arg-94 coordinates UDP-N-acetyl-alpha-D-glucosamine. The active-site Proton donor is Cys-118. The residue at position 118 (Cys-118) is a 2-(S-cysteinyl)pyruvic acid O-phosphothioketal. UDP-N-acetyl-alpha-D-glucosamine contacts are provided by residues 123-127 (RPVDL), Asp-309, and Ile-331.

It belongs to the EPSP synthase family. MurA subfamily.

It is found in the cytoplasm. It carries out the reaction phosphoenolpyruvate + UDP-N-acetyl-alpha-D-glucosamine = UDP-N-acetyl-3-O-(1-carboxyvinyl)-alpha-D-glucosamine + phosphate. It participates in cell wall biogenesis; peptidoglycan biosynthesis. Cell wall formation. Adds enolpyruvyl to UDP-N-acetylglucosamine. This is UDP-N-acetylglucosamine 1-carboxyvinyltransferase from Cereibacter sphaeroides (strain ATCC 17025 / ATH 2.4.3) (Rhodobacter sphaeroides).